Consider the following 544-residue polypeptide: MSNNGLDIQDKPPAPPMRNTSTMIGAGSKDAGTLNHGSKPLPPNPEEKKKKDRFYRAILPGDKTNKKKEKERPEISLPSDFEHTIHVGFDAVTGEFTGMPEQWARLLQTSNITKSEQKKNPQAVLDVLEFYNSKKTSNSQKYMSFTDKSAEDYNSSNTLNVKAVSETPAVPPVSEDEDDDDDGTPPPVIAPRPEHTKSVYTRSVIEPLPITPTRDVATSPISPTENNTTPPDALTRNTEKQKKKPKMSDEEILEKLRSIVSVGDPKKKYTRFEKIGQGASGTVYTAMDVATGQEVAIKQMNLQQQPKKELIINEILVMRENKNPNIVNYLDSYLVGDELWVVMEYLAGGSLTDVVTETCMDEGQIAAVCRECLQALEFLHSNQVIHRDIKSDNILLGMDGSVKLTDFGFCAQITPEQSKRSTMVGTPYWMAPEVVTRKAYGPKVDIWSLGIMAIEMIEGEPPYLNENPLRALYLIATNGTPELQNPEKLSAIFRDFLNRCLEMDVEKRGSAKELLQHQFLKIAKPLSSLTPLIAAAKEATKNNH.

The tract at residues 1–77 is disordered; sequence MSNNGLDIQD…KEKERPEISL (77 aa). Serine 2 is modified (N-acetylserine). Serine 21 is subject to Phosphoserine; by PKB and autocatalysis. A compositionally biased stretch (basic and acidic residues) spans 68-77; the sequence is KEKERPEISL. Residues 70–140 are autoregulatory region; the sequence is KERPEISLPS…YNSKKTSNSQ (71 aa). The 14-residue stretch at 75–88 folds into the CRIB domain; sequence ISLPSDFEHTIHVG. The interval 75–105 is GTPase-binding; it reads ISLPSDFEHTIHVGFDAVTGEFTGMPEQWAR. Threonine 84 bears the Phosphothreonine; by OXSR1 mark. Serine 115 carries the phosphoserine modification. Phosphotyrosine occurs at positions 131 and 142. A phosphoserine; by autocatalysis mark is found at serine 144 and serine 149. Position 153 is a phosphotyrosine; by JAK2 (tyrosine 153). A disordered region spans residues 161 to 193; the sequence is VKAVSETPAVPPVSEDEDDDDDGTPPPVIAPRP. Serine 174 is modified (phosphoserine). Residues 174–183 are compositionally biased toward acidic residues; that stretch reads SEDEDDDDDG. At threonine 184 the chain carries Phosphothreonine. Serine 198 is modified (phosphoserine; by autocatalysis). Residue tyrosine 200 is modified to Phosphotyrosine; by JAK2. A Phosphoserine; by autocatalysis modification is found at serine 203. Residues threonine 211 and threonine 218 each carry the phosphothreonine modification. The tract at residues 212 to 250 is disordered; it reads PTRDVATSPISPTENNTTPPDALTRNTEKQKKKPKMSDE. 2 positions are modified to phosphoserine: serine 219 and serine 222. Positions 219–230 are enriched in polar residues; sequence SPISPTENNTTP. Threonine 224, threonine 228, and threonine 229 each carry phosphothreonine. Positions 269–520 constitute a Protein kinase domain; it reads YTRFEKIGQG…AKELLQHQFL (252 aa). 275–283 lines the ATP pocket; the sequence is IGQGASGTV. Phosphotyrosine; by JAK2 is present on tyrosine 284. Residue lysine 298 participates in ATP binding. Catalysis depends on aspartate 388, which acts as the Proton acceptor. Threonine 422 carries the phosphothreonine; by autocatalysis, BRSK2 and PDPK1 modification.

It belongs to the protein kinase superfamily. STE Ser/Thr protein kinase family. STE20 subfamily. In terms of assembly, homodimer in its autoinhibited state. Active as monomer. Interacts with GIT1. Component of cytoplasmic complexes, which also contains PXN, ARHGEF7 and GIT1. Interacts with NISCH. Interacts with DVL1; mediates the formation of a DVL1, MUSK and PAK1 ternary complex involved in AChR clustering. Binds to the caspase-cleaved p110 isoform of CDC2L1 and CDC2L2, p110C, but not the full-length proteins. Interacts with ARHGEF7. Interacts tightly with GTP-bound but not GDP-bound CDC42/P21 and RAC1. Probably found in a ternary complex composed of DSCAM, PAK1 and RAC1. Interacts with DSCAM (via cytoplasmic domain); the interaction is direct and enhanced in presence of RAC1. Interacts with SCRIB. Interacts with PDPK1. Interacts (via kinase domain) with RAF1. Interacts with NCK1 and NCK2. Interacts with TBCB. Interacts with BRSK2. Interacts with SNAI1. Interacts with CIB1 (via N-terminal region); the interaction is direct, promotes PAK1 activity and occurs in a calcium-dependent manner. Interacts with INPP5K. Interacts with gamma-tubulin. Interacts with RHOU; the interaction promotes PAK1 activation. Mg(2+) serves as cofactor. In terms of processing, autophosphorylated in trans, meaning that in a dimer, one kinase molecule phosphorylates the other one. Activated by autophosphorylation at Thr-422 in response to a conformation change, triggered by interaction with GTP-bound CDC42 or RAC1. Activated by phosphorylation at Thr-422 by BRSK2 and by PDPK1. Phosphorylated by JAK2 in response to PRL; this increases PAK1 kinase activity. Phosphorylated at Ser-21 by PKB/AKT; this reduces interaction with NCK1 and association with focal adhesion sites. Upon DNA damage, phosphorylated at Thr-211 and translocates to the nucleoplasm. Phosphorylated at tyrosine residues, which can be enhanced by NTN1.

The protein localises to the cytoplasm. It is found in the cell junction. It localises to the focal adhesion. The protein resides in the cell projection. Its subcellular location is the lamellipodium. The protein localises to the cell membrane. It is found in the ruffle membrane. It localises to the invadopodium. The protein resides in the nucleus. Its subcellular location is the nucleoplasm. The protein localises to the chromosome. It is found in the cytoskeleton. It localises to the microtubule organizing center. The protein resides in the centrosome. The catalysed reaction is L-seryl-[protein] + ATP = O-phospho-L-seryl-[protein] + ADP + H(+). It carries out the reaction L-threonyl-[protein] + ATP = O-phospho-L-threonyl-[protein] + ADP + H(+). With respect to regulation, phosphorylation of Thr-84 by OXSR1 inhibits activation. Activated by binding small G proteins. Binding of GTP-bound CDC42 or RAC1 to the autoregulatory region releases monomers from the autoinhibited dimer, and enables activation by phosphorylation of Thr-422. Its function is as follows. Protein kinase involved in intracellular signaling pathways downstream of integrins and receptor-type kinases that plays an important role in cytoskeleton dynamics, in cell adhesion, migration, proliferation, apoptosis, mitosis, and in vesicle-mediated transport processes. Can directly phosphorylate BAD and protects cells against apoptosis. Activated by interaction with CDC42 and RAC1. Functions as a GTPase effector that links the Rho-related GTPases CDC42 and RAC1 to the JNK MAP kinase pathway. Phosphorylates and activates MAP2K1, and thereby mediates activation of downstream MAP kinases. Involved in the reorganization of the actin cytoskeleton, actin stress fibers and of focal adhesion complexes. Phosphorylates the tubulin chaperone TBCB and thereby plays a role in the regulation of microtubule biogenesis and organization of the tubulin cytoskeleton. Plays a role in the regulation of insulin secretion in response to elevated glucose levels. Part of a ternary complex that contains PAK1, DVL1 and MUSK that is important for MUSK-dependent regulation of AChR clustering during the formation of the neuromuscular junction (NMJ). Activity is inhibited in cells undergoing apoptosis, potentially due to binding of CDC2L1 and CDC2L2. Phosphorylates MYL9/MLC2. Phosphorylates RAF1 at 'Ser-338' and 'Ser-339' resulting in: activation of RAF1, stimulation of RAF1 translocation to mitochondria, phosphorylation of BAD by RAF1, and RAF1 binding to BCL2. Phosphorylates SNAI1 at 'Ser-246' promoting its transcriptional repressor activity by increasing its accumulation in the nucleus. In podocytes, promotes NR3C2 nuclear localization. Required for atypical chemokine receptor ACKR2-induced phosphorylation of LIMK1 and cofilin (CFL1) and for the up-regulation of ACKR2 from endosomal compartment to cell membrane, increasing its efficiency in chemokine uptake and degradation. In synapses, seems to mediate the regulation of F-actin cluster formation performed by SHANK3, maybe through CFL1 phosphorylation and inactivation. Plays a role in RUFY3-mediated facilitating gastric cancer cells migration and invasion. In response to DNA damage, phosphorylates MORC2 which activates its ATPase activity and facilitates chromatin remodeling. In neurons, plays a crucial role in regulating GABA(A) receptor synaptic stability and hence GABAergic inhibitory synaptic transmission through its role in F-actin stabilization. In hippocampal neurons, necessary for the formation of dendritic spines and excitatory synapses; this function is dependent on kinase activity and may be exerted by the regulation of actomyosin contractility through the phosphorylation of myosin II regulatory light chain (MLC). Along with GIT1, positively regulates microtubule nucleation during interphase. Phosphorylates FXR1, promoting its localization to stress granules and activity. Phosphorylates ILK on 'Thr-173' and 'Ser-246', promoting nuclear export of ILK. This is Serine/threonine-protein kinase PAK 1 from Bos taurus (Bovine).